The following is a 316-amino-acid chain: MYEWLNALPKAELHMHLEGSLEPELLFALAERNKIALPWADVETLRGAYAFNNLQEFLDLYYQGADVLRTEQDFYDLTWAYLQRCKAQNVIHTEPFFDPQTHTDRGIPFEVVLGGITQALKDGREQLGIGSGLILSFLRHLSEDEAQKTLDQALPFRDAFVAVGLDSSEKGHPPSKFQRVFDRARSEGFLTVAHAGEEGPPEYIWEAIDLLKIQRIDHGVRAIEDERLMQRIIDEQIPLTVCPLSNTKLCVFEHMSQHNILDMLERGVKVTVNSDDPAYFGGYVTENFHALYEHLGMTQDQARRLAQNSLDARLVR.

Zn(2+) is bound by residues histidine 14, histidine 16, and histidine 194. Residue glutamate 197 is the Proton donor of the active site. Aspartate 275 contributes to the Zn(2+) binding site. Aspartate 276 provides a ligand contact to substrate.

This sequence belongs to the metallo-dependent hydrolases superfamily. Adenosine and AMP deaminases family. Adenine deaminase type 2 subfamily. Zn(2+) is required as a cofactor.

The catalysed reaction is adenine + H2O + H(+) = hypoxanthine + NH4(+). In terms of biological role, catalyzes the hydrolytic deamination of adenine to hypoxanthine. Plays an important role in the purine salvage pathway and in nitrogen catabolism. The chain is Adenine deaminase from Pseudomonas entomophila (strain L48).